The following is a 310-amino-acid chain: MKTLIRKFSRTAITVVLVILAFIAIFNAWVYYTESPWTRDARFSADVVAIAPDVSGLITQVNVHDNQLVKKGQVLFTIDQPRYQKALEEAQADVAYYQVLAQEKRQEAGRRNRLGVQAMSREEIDQANNVLQTVLHQLAKAQATRDLAKLDLERTVIRAPADGWVTNLNVYTGEFITRGSTAVALVKQNSFYVLAYMEETKLEGVRPGYRAEITPLGSNKVLKGTVDSVAAGVTNASSTSDDKGMATIDSNLEWVRLAQRVPVRIRLDNQQENIWPAGTTATVVVTGKQDRDESQDSFFRKMAHRLREFG.

A helical membrane pass occupies residues 12-32; it reads AITVVLVILAFIAIFNAWVYY.

Belongs to the membrane fusion protein (MFP) (TC 8.A.1) family.

The protein localises to the cell inner membrane. Functionally, forms an efflux pump with AaeB. The protein is p-hydroxybenzoic acid efflux pump subunit AaeA of Escherichia coli O17:K52:H18 (strain UMN026 / ExPEC).